Here is a 423-residue protein sequence, read N- to C-terminus: Gamma-glutamyl phosphate reductase (423 aa).

This sequence belongs to the gamma-glutamyl phosphate reductase family.

The protein localises to the cytoplasm. The enzyme catalyses L-glutamate 5-semialdehyde + phosphate + NADP(+) = L-glutamyl 5-phosphate + NADPH + H(+). Its pathway is amino-acid biosynthesis; L-proline biosynthesis; L-glutamate 5-semialdehyde from L-glutamate: step 2/2. Catalyzes the NADPH-dependent reduction of L-glutamate 5-phosphate into L-glutamate 5-semialdehyde and phosphate. The product spontaneously undergoes cyclization to form 1-pyrroline-5-carboxylate. The sequence is that of Gamma-glutamyl phosphate reductase from Burkholderia ambifaria (strain MC40-6).